Reading from the N-terminus, the 57-residue chain is Granulin-2 (57 aa).

Disulfide bonds link Cys-4–Cys-16 and Cys-10–Cys-26.

This sequence belongs to the granulin family. In terms of processing, granulins are disulfide bridged. In terms of tissue distribution, ubiquitous.

The protein localises to the secreted. In terms of biological role, granulins have possible cytokine-like activity. They may play a role in inflammation, wound repair, and tissue remodeling. The protein is Granulin-2 of Cyprinus carpio (Common carp).